We begin with the raw amino-acid sequence, 219 residues long: Leucyl/phenylalanyl-tRNA--protein transferase (219 aa).

This sequence belongs to the L/F-transferase family.

It is found in the cytoplasm. It catalyses the reaction N-terminal L-lysyl-[protein] + L-leucyl-tRNA(Leu) = N-terminal L-leucyl-L-lysyl-[protein] + tRNA(Leu) + H(+). The enzyme catalyses N-terminal L-arginyl-[protein] + L-leucyl-tRNA(Leu) = N-terminal L-leucyl-L-arginyl-[protein] + tRNA(Leu) + H(+). It carries out the reaction L-phenylalanyl-tRNA(Phe) + an N-terminal L-alpha-aminoacyl-[protein] = an N-terminal L-phenylalanyl-L-alpha-aminoacyl-[protein] + tRNA(Phe). In terms of biological role, functions in the N-end rule pathway of protein degradation where it conjugates Leu, Phe and, less efficiently, Met from aminoacyl-tRNAs to the N-termini of proteins containing an N-terminal arginine or lysine. This is Leucyl/phenylalanyl-tRNA--protein transferase from Leptospira interrogans serogroup Icterohaemorrhagiae serovar copenhageni (strain Fiocruz L1-130).